The primary structure comprises 210 residues: Large ribosomal subunit protein uL4 (210 aa).

As to quaternary structure, part of the 50S ribosomal subunit. Post-translationally, the N-terminus is blocked.

In terms of biological role, one of the primary rRNA binding proteins, this protein initially binds near the 5'-end of the 23S rRNA. It is important during the early stages of 50S assembly. It makes multiple contacts with different domains of the 23S rRNA in the assembled 50S subunit and ribosome. Functionally, forms part of the polypeptide exit tunnel. This protein can be incorporated into E.coli ribosomes in vivo, which resulted in decreased peptidyltransferase (Ptase) activity of the hybrid ribosomes. The hybrid 50S subunits associate less well with 30S subunits to form the ribosome. In Thermus thermophilus (strain ATCC 27634 / DSM 579 / HB8), this protein is Large ribosomal subunit protein uL4 (rplD).